The chain runs to 100 residues: CRYICPLGAALAIPSKFRLFDWLKRRKECGNPCQLCAKECEIQAIHPDGRINGNECHYCLDCQMTYHNDNKCPPLINKRKKRGKKAADPQLIPAVEVSDA.

The protein localises to the cell membrane. Its function is as follows. Transcriptional activator of the nitrous-oxide reductase gene NosZ. This Pseudomonas aeruginosa protein is Regulatory protein NosR (nosR).